Here is a 1663-residue protein sequence, read N- to C-terminus: Complement C3 (1663 aa).

A signal peptide spans 1 to 24; the sequence is MGPASGSQLLVLLLLLASSPLALG. Phosphoserine is present on serine 40. 13 disulfide bridges follow: cysteine 559–cysteine 816, cysteine 626–cysteine 661, cysteine 693–cysteine 720, cysteine 694–cysteine 727, cysteine 707–cysteine 728, cysteine 873–cysteine 1513, cysteine 1101–cysteine 1158, cysteine 1358–cysteine 1489, cysteine 1389–cysteine 1458, cysteine 1506–cysteine 1511, cysteine 1518–cysteine 1590, cysteine 1537–cysteine 1661, and cysteine 1637–cysteine 1646. Position 671 is a phosphoserine (serine 671). The Anaphylatoxin-like domain maps to 693-728; the sequence is CCEDGMRDIPMRYSCQRRARLITQGENCIKAFIDCC. N-linked (GlcNAc...) asparagine glycosylation is present at asparagine 939. Residue serine 968 is modified to Phosphoserine. Positions 1010 to 1013 form a cross-link, isoglutamyl cysteine thioester (Cys-Gln); that stretch reads CGEQ. Position 1321 is a phosphoserine (serine 1321). The NTR domain occupies 1518 to 1661; it reads CFMQQSQEKI…FTESMVVYGC (144 aa). Serine 1573 is subject to Phosphoserine. Asparagine 1617 carries an N-linked (GlcNAc...) asparagine glycan. The tract at residues 1634–1659 is interaction with CFP/properdin; it reads AEECQDQKYQKQCEELGAFTESMVVY.

In absence of complement activation, the C3 precursor is first processed by the removal of 4 Arg residues, forming two chains, beta and alpha, linked by a disulfide bond. In terms of assembly, complement C3b is composed of complement C3b and complement C3 beta chains that are associated via disulfide bonds. Non-enzymatic component of the C5 convertase, also named C4bC2bC3b, composed of the serine protease complement C2b (C2), complement C3b, as well as complement C4b (C4). Non-enzymatic component of the C5 convertase of the alternative complement pathways composed of the serine protease complement CFB and complement C3b. Interacts with CFP; interaction takes place together with CFB in the alternative complement system and allows the complex to become active. Interacts with CR1 (via Sushi 8 and Sushi 9 domains). Interacts with CFH. As to quaternary structure, interacts with CFH. Interacts with CR2. During pregnancy, C3dg exists as a complex (probably a 2:2:2 heterohexamer) with AGT and the proform of PRG2. Interacts with CR2 (via the N-terminal Sushi domains 1 and 2). Post-translationally, C3 precursor is first processed by the removal of 4 Arg residues, forming two chains, beta and alpha, linked by a disulfide bond. During activation of the complement systems, the alpha chain is cleaved into C3a and C3b by the C3 convertase: C3b stays linked to the beta chain, while C3a is released in the plasma. The alpha chain is cleaved by the serine protease complement C2b component of the C3 convertase to generate C3a and C3b following activation by the classical, lectin and GZMK complement systems. The alpha chain is cleaved by CFB component of the C3 convertase to generate C3a and C3b following activation by the alternative complement system. In terms of processing, C3a is further processed by carboxypeptidases to release the C-terminal arginine residue generating the acylation stimulating protein (ASP). Levels of ASP are increased in adipocytes in the postprandial period and by insulin and dietary chylomicrons. Complement C3b is rapidly split in two positions by factor I (CFI) and a cofactor (CFH) to form iC3b (inactivated C3b) and C3f which is released. CFI and CFH catalyze proteolytic degradation of already-deposited complement C3b. Then iC3b is slowly cleaved (possibly by CFI) to form C3c (beta chain + alpha' chain fragment 1 + alpha' chain fragment 2), C3dg and C3f. Other proteases produce other fragments such as C3d or C3g. Post-translationally, upon activation, the internal thioester bond reacts with carbohydrate antigens on the target surface to form amide or ester bonds, leading to covalent association with the surface of pathogens. In terms of processing, complement C3b interacts with complement C4b via a thioester linkage. Phosphorylated by FAM20C in the extracellular medium.

It is found in the secreted. Its subcellular location is the cell surface. Complement activation is inhibited by VSIG4. Precursor of non-enzymatic components of the classical, alternative, lectin and GZMK complement pathways, which consist in a cascade of proteins that leads to phagocytosis and breakdown of pathogens and signaling that strengthens the adaptive immune system. Functionally, non-enzymatic component of C5 convertase. Generated following cleavage by C3 convertase, it covalently attaches to the surface of pathogens, where it acts as an opsonin that marks the surface of antigens for removal. Complement C3b binds covalently via its reactive thioester, to cell surface carbohydrates or immune aggregates. Together with complement C4b, it then recruits the serine protease complement C2b to form the C5 convertase, which cleaves and activate C5, the next component of the complement pathways. In the alternative complement pathway, recruits the serine protease CFB to form the C5 convertase that cleaves and activates C5. In terms of biological role, mediator of local inflammatory process released following cleavage by C3 convertase. Acts by binding to its receptor, C3AR1, activating G protein-coupled receptor signaling, promoting the phosphorylation, ARRB2-mediated internalization and endocytosis of C3AR1. C3a anaphylatoxin stimulates the activation of immune cells such as mast cells and basophilic leukocytes to release inflammation agents, such as cytokines, chemokines and histamine, which promote inflammation development. Also acts as potent chemoattractant for the migration of macrophages and neutrophils to the inflamed tissues, resulting in neutralization of the inflammatory triggers by multiple ways, such as phagocytosis and generation of reactive oxidants. Its function is as follows. Adipogenic hormone that stimulates triglyceride synthesis and glucose transport in adipocytes, regulating fat storage and playing a role in postprandial triglyceride clearance. Appears to stimulate triglyceride synthesis via activation of the PLC, MAPK and AKT signaling pathways. Acts by binding to its receptor, C5AR2, activating G protein-coupled receptor signaling, promoting the phosphorylation, ARRB2-mediated internalization and endocytosis of C5AR2. Acts as a chemoattractant for neutrophils in chronic inflammation. This is Complement C3 from Mus musculus (Mouse).